Consider the following 658-residue polypeptide: Aminopeptidase P1 (658 aa).

Residues arginine 69 and histidine 436 each coordinate a peptide. Aspartate 456, aspartate 467, and histidine 530 together coordinate Mn(2+). A peptide-binding residues include histidine 530, histidine 539, and glutamate 563. Positions 563 and 577 each coordinate Mn(2+).

Belongs to the peptidase M24B family. As to quaternary structure, homodimer. Interacts with N-1-naphthylphthalamic acid (NPA). Interacts with NBCL/BOP2/COCH around the plasma membrane and in the nucleus; this interaction disturbs its regulation of the nuclear transcription factor Y subunit (NF-YA1). The cofactor is Mn(2+). It depends on Zn(2+) as a cofactor. As to expression, expressed at similar levels in shoot apical meristems (SAM), root meristems (RM), root apical meristems (RAM), roots and leaves and, to a slightly lesser degree, in root nodules.

The protein resides in the nucleus. It localises to the cytoplasm. The protein localises to the cell membrane. It is found in the microsome membrane. It carries out the reaction Release of any N-terminal amino acid, including proline, that is linked to proline, even from a dipeptide or tripeptide.. Its function is as follows. Catalyzes the removal of a penultimate prolyl residue from the N-termini of peptides, such as Arg-Pro-Pro. Aminopeptidase that binds to the auxin transport inhibitor N-1-naphthylphthalamic acid (NPA). May play a negative role in the regulation of PIN auxin transport proteins. Involved in the coordination of the symbiotic nodule developmental program; prevents the formation of root nodules by regulating the expression of the nuclear transcription factor Y subunit (NF-YA1), a key nodulin. In Lotus japonicus (Lotus corniculatus var. japonicus), this protein is Aminopeptidase P1.